Consider the following 199-residue polypeptide: Probable cobalt-precorrin-6B C(15)-methyltransferase (decarboxylating) (199 aa).

Residues Thr-24, 48–52 (GCGTG), Asp-72, and Ala-101 each bind S-adenosyl-L-methionine.

This sequence belongs to the methyltransferase superfamily. Archaeal-type CbiT family.

The enzyme catalyses Co-precorrin-6B + S-adenosyl-L-methionine = Co-precorrin-7 + S-adenosyl-L-homocysteine + CO2. It participates in cofactor biosynthesis; adenosylcobalamin biosynthesis; cob(II)yrinate a,c-diamide from sirohydrochlorin (anaerobic route): step 8/10. Functionally, catalyzes the methylation of C-15 in cobalt-precorrin-6B followed by the decarboxylation of C-12 to form cobalt-precorrin-7. In Saccharolobus islandicus (strain Y.N.15.51 / Yellowstone #2) (Sulfolobus islandicus), this protein is Probable cobalt-precorrin-6B C(15)-methyltransferase (decarboxylating).